We begin with the raw amino-acid sequence, 89 residues long: Small ribosomal subunit protein uS14A (89 aa).

This sequence belongs to the universal ribosomal protein uS14 family. In terms of assembly, part of the 30S ribosomal subunit. Contacts proteins S3 and S10.

Functionally, binds 16S rRNA, required for the assembly of 30S particles and may also be responsible for determining the conformation of the 16S rRNA at the A site. The chain is Small ribosomal subunit protein uS14A from Listeria monocytogenes serotype 4b (strain F2365).